A 343-amino-acid polypeptide reads, in one-letter code: Holliday junction branch migration complex subunit RuvB (343 aa).

Residues 1 to 26 (MKEKILTFSSDPSSPVTRHETEEDTG) form a disordered region. The segment at 3 to 193 (EKILTFSSDP…FGIFRKFDFY (191 aa)) is large ATPase domain (RuvB-L). The segment covering 7–16 (TFSSDPSSPV) has biased composition (polar residues). ATP contacts are provided by residues L32, R33, G74, K77, T78, T79, 140–142 (EDF), R183, Y193, and R230. T78 lines the Mg(2+) pocket. The segment at 194–264 (SRQDLARIVS…AIDDALALEG (71 aa)) is small ATPAse domain (RuvB-S). The tract at residues 267 to 343 (EKGLTGLDRS…YRHLGVQWRG (77 aa)) is head domain (RuvB-H). Positions 322 and 327 each coordinate DNA.

Belongs to the RuvB family. As to quaternary structure, homohexamer. Forms an RuvA(8)-RuvB(12)-Holliday junction (HJ) complex. HJ DNA is sandwiched between 2 RuvA tetramers; dsDNA enters through RuvA and exits via RuvB. An RuvB hexamer assembles on each DNA strand where it exits the tetramer. Each RuvB hexamer is contacted by two RuvA subunits (via domain III) on 2 adjacent RuvB subunits; this complex drives branch migration. In the full resolvosome a probable DNA-RuvA(4)-RuvB(12)-RuvC(2) complex forms which resolves the HJ.

It localises to the cytoplasm. The catalysed reaction is ATP + H2O = ADP + phosphate + H(+). Functionally, the RuvA-RuvB-RuvC complex processes Holliday junction (HJ) DNA during genetic recombination and DNA repair, while the RuvA-RuvB complex plays an important role in the rescue of blocked DNA replication forks via replication fork reversal (RFR). RuvA specifically binds to HJ cruciform DNA, conferring on it an open structure. The RuvB hexamer acts as an ATP-dependent pump, pulling dsDNA into and through the RuvAB complex. RuvB forms 2 homohexamers on either side of HJ DNA bound by 1 or 2 RuvA tetramers; 4 subunits per hexamer contact DNA at a time. Coordinated motions by a converter formed by DNA-disengaged RuvB subunits stimulates ATP hydrolysis and nucleotide exchange. Immobilization of the converter enables RuvB to convert the ATP-contained energy into a lever motion, pulling 2 nucleotides of DNA out of the RuvA tetramer per ATP hydrolyzed, thus driving DNA branch migration. The RuvB motors rotate together with the DNA substrate, which together with the progressing nucleotide cycle form the mechanistic basis for DNA recombination by continuous HJ branch migration. Branch migration allows RuvC to scan DNA until it finds its consensus sequence, where it cleaves and resolves cruciform DNA. This is Holliday junction branch migration complex subunit RuvB from Desulfosudis oleivorans (strain DSM 6200 / JCM 39069 / Hxd3) (Desulfococcus oleovorans).